Reading from the N-terminus, the 463-residue chain is Ataxin-10 homolog (463 aa).

The protein belongs to the ataxin-10 family.

The protein resides in the cytoplasm. Its function is as follows. May play a role in the regulation of cytokinesis. In Candida albicans (strain SC5314 / ATCC MYA-2876) (Yeast), this protein is Ataxin-10 homolog (CTR86).